A 101-amino-acid chain; its full sequence is MGGVATLRFHKMPTGCIVCVSHKRNQDGYFRYSIGSSRKGEKKHFMFHRWVWEQHKGPIPDGYEIDHICLNRGCCNVEHLQCIPKRDHIIKTNKERKLVKK.

This is an uncharacterized protein from Enterobacteria phage T3 (Bacteriophage T3).